Consider the following 348-residue polypeptide: Abnormal cell lineage protein 44 (348 aa).

Residues 1-25 form the signal peptide; that stretch reads MRAAPFDFFFQSTALSTFFILCSLA. 11 disulfide bridges follow: Cys-91–Cys-102, Cys-141–Cys-149, Cys-151–Cys-165, Cys-213–Cys-227, Cys-215–Cys-222, Cys-272–Cys-299, Cys-282–Cys-294, Cys-298–Cys-338, Cys-314–Cys-329, Cys-316–Cys-326, and Cys-321–Cys-322. Ser-219 carries O-palmitoleoyl serine; by mom-1 lipidation. Asn-286 is a glycosylation site (N-linked (GlcNAc...) asparagine).

This sequence belongs to the Wnt family. Post-translationally, palmitoleoylation is required for efficient binding to frizzled receptors. Depalmitoleoylation leads to Wnt signaling pathway inhibition. Expressed in the tail hypodermis.

The protein resides in the secreted. It localises to the extracellular space. It is found in the extracellular matrix. In terms of biological role, ligand for members of the frizzled family of seven transmembrane receptors. Affects male tail development, vulval precursor cell specification and egg laying. Involved in morphogenesis by influencing polarity of asymmetric cell divisions of the B, U, and F cells in the male, and the T cell in males and hermaphrodites. Controls spindle orientation in B-gamma cell division during male copulatory spicule development. Involved in specification of the P7.p lineage during vulval development. Has a role in providing polarity and default lin-17 localization in axon development and positioning of neuromuscular synapses in DA9 regions by negatively regulating synaptogenesis. Plays a role in motorneuron development by promoting the extension of the anterior neurite of ventral D-type GABAergic motorneurons along the anterior-posterior axis of the ventral nerve cord. Positively regulates cilium position and dendrite morphogenesis in postembryonic PQR gas-sensing neurons. This is likely through regulating the localization of grdn-1 to the distal dendrites of PQR sensory neurons. This chain is Abnormal cell lineage protein 44, found in Caenorhabditis elegans.